Consider the following 145-residue polypeptide: Phospholipase A2, membrane associated (145 aa).

An N-terminal signal peptide occupies residues 1-20 (MKLLLLLLVVMASDLPQAHG). Intrachain disulfides connect cysteine 46/cysteine 138, cysteine 48/cysteine 64, cysteine 63/cysteine 118, cysteine 69/cysteine 145, cysteine 70/cysteine 111, cysteine 79/cysteine 104, and cysteine 97/cysteine 109. Ca(2+)-binding residues include histidine 47, glycine 49, and glycine 51. Histidine 67 is an active-site residue. Aspartate 68 is a binding site for Ca(2+). The active site involves aspartate 112.

Belongs to the phospholipase A2 family. Ca(2+) is required as a cofactor. Alveolar macrophages, and at much lower levels in peripheral blood monocytes and peritoneal macrophages.

Its subcellular location is the secreted. The protein localises to the cell membrane. The protein resides in the mitochondrion outer membrane. The catalysed reaction is a 1,2-diacyl-sn-glycero-3-phosphoethanolamine + H2O = a 1-acyl-sn-glycero-3-phosphoethanolamine + a fatty acid + H(+). It catalyses the reaction 1-hexadecanoyl-2-(9Z-octadecenoyl)-sn-glycero-3-phosphoethanolamine + H2O = 1-hexadecanoyl-sn-glycero-3-phosphoethanolamine + (9Z)-octadecenoate + H(+). The enzyme catalyses 1-hexadecanoyl-2-(9Z,12Z-octadecadienoyl)-sn-glycero-3-phosphoethanolamine + H2O = 1-hexadecanoyl-sn-glycero-3-phosphoethanolamine + (9Z,12Z)-octadecadienoate + H(+). It carries out the reaction 1-hexadecanoyl-2-(5Z,8Z,11Z,14Z-eicosatetraenoyl)-sn-glycero-3-phosphoethanolamine + H2O = 1-hexadecanoyl-sn-glycero-3-phosphoethanolamine + (5Z,8Z,11Z,14Z)-eicosatetraenoate + H(+). The catalysed reaction is N-hexadecanoyl-1,2-di-(9Z-octadecenoyl)-sn-glycero-3-phosphoethanolamine + H2O = N-hexadecanoyl-1-(9Z-octadecenoyl)-sn-glycero-3-phosphoethanolamine + (9Z)-octadecenoate + H(+). It catalyses the reaction 1,2-dihexadecanoyl-sn-glycero-3-phospho-(1'-sn-glycerol) + H2O = 1-hexadecanoyl-sn-glycero-3-phospho-(1'-sn-glycerol) + hexadecanoate + H(+). The enzyme catalyses 1-hexadecanoyl-2-(9Z-octadecenoyl)-sn-glycero-3-phosphoglycerol + H2O = 1-hexadecanoyl-sn-glycero-3-phosphoglycerol + (9Z)-octadecenoate + H(+). It carries out the reaction 1-hexadecanoyl-2-(9Z-octadecenoyl)-sn-glycero-3-phospho-(1'-sn-glycerol) + H2O = 1-hexadecanoyl-sn-glycero-3-phospho-(1'-sn-glycerol) + (9Z)-octadecenoate + H(+). The catalysed reaction is a 1,2-diacyl-sn-glycero-3-phosphocholine + H2O = a 1-acyl-sn-glycero-3-phosphocholine + a fatty acid + H(+). It catalyses the reaction 1,2-dihexadecanoyl-sn-glycero-3-phosphocholine + H2O = 1-hexadecanoyl-sn-glycero-3-phosphocholine + hexadecanoate + H(+). The enzyme catalyses 1-hexadecanoyl-2-(9Z-octadecenoyl)-sn-glycero-3-phosphocholine + H2O = 1-hexadecanoyl-sn-glycero-3-phosphocholine + (9Z)-octadecenoate + H(+). It carries out the reaction 1-hexadecanoyl-2-(9Z,12Z-octadecadienoyl)-sn-glycero-3-phosphocholine + H2O = (9Z,12Z)-octadecadienoate + 1-hexadecanoyl-sn-glycero-3-phosphocholine + H(+). The catalysed reaction is 1-hexadecanoyl-2-(4Z,7Z,10Z,13Z,16Z,19Z-docosahexaenoyl)-sn-glycero-3-phosphocholine + H2O = (4Z,7Z,10Z,13Z,16Z,19Z)-docosahexaenoate + 1-hexadecanoyl-sn-glycero-3-phosphocholine + H(+). Secretory calcium-dependent phospholipase A2 that primarily targets extracellular phospholipids with implications in host antimicrobial defense, inflammatory response and tissue regeneration. Hydrolyzes the ester bond of the fatty acyl group attached at sn-2 position of phospholipids (phospholipase A2 activity) with preference for phosphatidylethanolamines and phosphatidylglycerols over phosphatidylcholines. Contributes to lipid remodeling of cellular membranes and generation of lipid mediators involved in pathogen clearance. Displays bactericidal activity against Gram-positive bacteria by directly hydrolyzing phospholipids of the bacterial membrane. Upon sterile inflammation, targets membrane phospholipids of extracellular mitochondria released from activated platelets, generating free unsaturated fatty acids such as arachidonate that is used by neighboring leukocytes to synthesize inflammatory eicosanoids such as leukotrienes. Simultaneously, by compromising mitochondrial membrane integrity, promotes the release in circulation of potent damage-associated molecular pattern molecules that activate the innate immune response. Plays a stem cell regulator role in the intestinal crypt. Within intracellular compartment mediates Paneth cell differentiation and its stem cell supporting functions by inhibiting Wnt signaling pathway in intestinal stem cell (ICS). Secreted in the intestinal lumen upon inflammation, acts in an autocrine way and promotes prostaglandin E2 synthesis that stimulates Wnt signaling pathway in ICS cells and tissue regeneration. May play a role in the biosynthesis of N-acyl ethanolamines that regulate energy metabolism and inflammation. Hydrolyzes N-acyl phosphatidylethanolamines to N-acyl lysophosphatidylethanolamines, which are further cleaved by a lysophospholipase D to release N-acyl ethanolamines. Independent of its catalytic activity, acts as a ligand for integrins. Binds to and activates integrins ITGAV:ITGB3, ITGA4:ITGB1 and ITGA5:ITGB1. Binds to a site (site 2) which is distinct from the classical ligand-binding site (site 1) and induces integrin conformational changes and enhanced ligand binding to site 1. Induces cell proliferation in an integrin-dependent manner. In Cavia porcellus (Guinea pig), this protein is Phospholipase A2, membrane associated (PLA2G2A).